We begin with the raw amino-acid sequence, 155 residues long: Small ribosomal subunit protein uS7c (155 aa).

Belongs to the universal ribosomal protein uS7 family. In terms of assembly, part of the 30S ribosomal subunit.

The protein resides in the plastid. In terms of biological role, one of the primary rRNA binding proteins, it binds directly to 16S rRNA where it nucleates assembly of the head domain of the 30S subunit. In Aneura mirabilis (Parasitic liverwort), this protein is Small ribosomal subunit protein uS7c (rps7).